The sequence spans 314 residues: MEFKHYSVLRDETIENLNIRPDGIYVDGTLGGAGHSYEIAKRLSDKGRLIGIDQDADAIKAAGERLAEFGDRVTIVRSNYSDMKNVLHSLGIEKVDGIMLDLGVSSFQLDTPKRGFTYRSEDAPLDMRMDDRNALTARDIVNTYSENDLYRIIRDYGEDKFAKNIAKHIVAARQKQEITTTGELNEIIKAAIPQKVRATGGHPSKRTYQAIRIELNHELDVLRDNLDDMIDLLNPGGRICIITFHSLEDRIVKSNFKKNENPCTCPPSFPVCVCGNKSKGTVITRKPILPSEKELEENSRSKSAKLRVFEKNDL.

Residues 33 to 35 (AGH), Asp53, Tyr80, Asp101, and Gln108 each bind S-adenosyl-L-methionine. Residues 293–314 (KELEENSRSKSAKLRVFEKNDL) form a disordered region.

Belongs to the methyltransferase superfamily. RsmH family.

The protein resides in the cytoplasm. It carries out the reaction cytidine(1402) in 16S rRNA + S-adenosyl-L-methionine = N(4)-methylcytidine(1402) in 16S rRNA + S-adenosyl-L-homocysteine + H(+). In terms of biological role, specifically methylates the N4 position of cytidine in position 1402 (C1402) of 16S rRNA. This is Ribosomal RNA small subunit methyltransferase H 2 from Agathobacter rectalis (strain ATCC 33656 / DSM 3377 / JCM 17463 / KCTC 5835 / VPI 0990) (Eubacterium rectale).